We begin with the raw amino-acid sequence, 512 residues long: Tyrosine-protein kinase Lyn (512 aa).

The interval 1–50 (MGCIKSKRKDNLNDDGVDMKTQPVRNTDRTIYVRDPTSNKQQRPVPESQL) is disordered. Gly2 is lipidated: N-myristoyl glycine. Cys3 carries S-palmitoyl cysteine lipidation. The SH3 domain occupies 63–123 (EQGDIVVALY…PSNYVAKVNT (61 aa)). The 98-residue stretch at 129 to 226 (WFFKDITRKD…GLCRRLEKAC (98 aa)) folds into the SH2 domain. Tyr193 carries the phosphotyrosine modification. Ser228 is subject to Phosphoserine. The 255-residue stretch at 247–501 (IKLVKKLGAG…YLQSVLDDFY (255 aa)) folds into the Protein kinase domain. ATP-binding positions include 253–261 (LGAGQFGEV) and Lys275. Phosphotyrosine is present on residues Tyr306 and Tyr316. The Proton acceptor role is filled by Asp367. Tyr397 carries the phosphotyrosine; by autocatalysis modification. Tyr460 and Tyr473 each carry phosphotyrosine. A Phosphotyrosine; by autocatalysis, CSK and MATK modification is found at Tyr508.

This sequence belongs to the protein kinase superfamily. Tyr protein kinase family. SRC subfamily. As to quaternary structure, interacts with TEC. Interacts (via SH2 domain) with FLT3 (tyrosine phosphorylated). Interacts with LIME1 and with CD79A upon activation of the B-cell antigen receptor. Interacts with the B-cell receptor complex. Interacts with phosphorylated THEMIS2. Interacts with EPOR. Interacts with MS4A2/FCER1B. Interaction (via the SH2 and SH3 domains) with MUC1 is stimulated by IL7 and the subsequent phosphorylation increases the binding between MUC1 and CTNNB1/beta-catenin. Interacts with ADAM15. Interacts with NDFIP2 and more weakly with NDFIP1. Interacts with FASLG. Interacts with KIT. Interacts with HCLS1. Interacts with FCGR2B. Interacts with FCGR1A; the interaction may be indirect. Interacts with CD19, CD22, CD79A and CD79B. Interacts (via SH3 domain) with CBLC, PPP1R15A and PDE4A. Interacts with TGFB1I1. Interacts (via SH3 domain) with PIK3R1, the regulatory subunit of phosphatidylinositol 3-kinase; this interaction enhances phosphatidylinositol 3-kinase activity. Interacts with CSF2RB, the common subunit of the IL3, IL5 and CSF2 receptors. Interacts with PAG1; identified in a complex with PAG1 and STAT3. Interacts with ABL1. Interacts with PTPN6/SHP-1. Interacts (via SH3 domain) with SCIMP (via proline-rich region). This interaction facilitates the phosphorylation of SCIMP 'Tyr-96', which enhances binding of SCIMP to TLR4, and consequently the phosphorylation of TLR4 in response to stimulation by lipopolysaccharide in macrophages. Interacts with LPXN (via LD motif 3) and the interaction is induced upon B-cell antigen receptor (BCR) activation. Interacts (via SH3-domain) with ANKRD54 (via ankyrin repeat region) in an activation-independent status of LYN. Forms a multiprotein complex with ANKRD54 and HCLS1. Interacts (via SH2 and SH3 domains) with UNC119; leading to LYN activation. Interacts with CD36. Interacts with LYN. Interacts with SKAP1 and FYB1; this interaction promotes the phosphorylation of CLNK. Interacts with BCAR1/CAS and NEDD9/HEF1. Post-translationally, ubiquitinated. Ubiquitination is SH3-dependent. In terms of processing, autophosphorylated. Phosphorylated on tyrosine residues in response to KIT signaling. Phosphorylation at Tyr-397 is required for optimal activity. Phosphorylation at Tyr-508 inhibits kinase activity. Phosphorylated at Tyr-508 by CSK. Dephosphorylated by PTPRC/CD45. Becomes rapidly phosphorylated upon activation of the B-cell receptor and the immunoglobulin receptor FCGR1A. Phosphorylated in response to integrin ITGB1 in B-cells. Detected in spleen (at protein level). Expressed predominantly in B-lymphoid and myeloid cells.

The protein localises to the cell membrane. It is found in the nucleus. Its subcellular location is the cytoplasm. It localises to the perinuclear region. The protein resides in the golgi apparatus. The protein localises to the membrane. The catalysed reaction is L-tyrosyl-[protein] + ATP = O-phospho-L-tyrosyl-[protein] + ADP + H(+). Its activity is regulated as follows. Subject to autoinhibition, mediated by intramolecular interactions between the SH2 domain and the C-terminal phosphotyrosine. Phosphorylation at Tyr-397 is required for optimal activity. Phosphorylated by CSK at Tyr-508; phosphorylation at Tyr-508 inhibits kinase activity. Kinase activity is modulated by dephosphorylation by PTPRC/CD45. In terms of biological role, non-receptor tyrosine-protein kinase that transmits signals from cell surface receptors and plays an important role in the regulation of innate and adaptive immune responses, hematopoiesis, responses to growth factors and cytokines, integrin signaling, but also responses to DNA damage and genotoxic agents. Functions primarily as negative regulator, but can also function as activator, depending on the context. Required for the initiation of the B-cell response, but also for its down-regulation and termination. Plays an important role in the regulation of B-cell differentiation, proliferation, survival and apoptosis, and is important for immune self-tolerance. Acts downstream of several immune receptors, including the B-cell receptor, CD79A, CD79B, CD5, CD19, CD22, FCER1, FCGR2, FCGR1A, TLR2 and TLR4. Plays a role in the inflammatory response to bacterial lipopolysaccharide. Mediates the responses to cytokines and growth factors in hematopoietic progenitors, platelets, erythrocytes, and in mature myeloid cells, such as dendritic cells, neutrophils and eosinophils. Acts downstream of EPOR, KIT, MPL, the chemokine receptor CXCR4, as well as the receptors for IL3, IL5 and CSF2. Plays an important role in integrin signaling. Regulates cell proliferation, survival, differentiation, migration, adhesion, degranulation, and cytokine release. Involved in the regulation of endothelial activation, neutrophil adhesion and transendothelial migration. Down-regulates signaling pathways by phosphorylation of immunoreceptor tyrosine-based inhibitory motifs (ITIM), that then serve as binding sites for phosphatases, such as PTPN6/SHP-1, PTPN11/SHP-2 and INPP5D/SHIP-1, that modulate signaling by dephosphorylation of kinases and their substrates. Phosphorylates LIME1 in response to CD22 activation. Phosphorylates BTK, CBL, CD5, CD19, CD72, CD79A, CD79B, CSF2RB, DOK1, HCLS1, LILRB3/PIR-B, MS4A2/FCER1B, SYK and TEC. Promotes phosphorylation of SIRPA, PTPN6/SHP-1, PTPN11/SHP-2 and INPP5D/SHIP-1. Required for rapid phosphorylation of FER in response to FCER1 activation. Mediates KIT phosphorylation. Acts as an effector of EPOR (erythropoietin receptor) in controlling KIT expression and may play a role in erythroid differentiation during the switch between proliferation and maturation. Depending on the context, activates or inhibits several signaling cascades. Regulates phosphatidylinositol 3-kinase activity and AKT1 activation. Regulates activation of the MAP kinase signaling cascade, including activation of MAP2K1/MEK1, MAPK1/ERK2, MAPK3/ERK1, MAPK8/JNK1 and MAPK9/JNK2. Mediates activation of STAT5A and/or STAT5B. Phosphorylates LPXN on 'Tyr-72'. Kinase activity facilitates TLR4-TLR6 heterodimerization and signal initiation. Phosphorylates SCIMP on 'Tyr-96'; this enhances binding of SCIMP to TLR4, promoting the phosphorylation of TLR4, and a selective cytokine response to lipopolysaccharide in macrophages. Phosphorylates CLNK. Phosphorylates BCAR1/CAS and NEDD9/HEF1. The sequence is that of Tyrosine-protein kinase Lyn (Lyn) from Rattus norvegicus (Rat).